Here is a 217-residue protein sequence, read N- to C-terminus: N-(5'-phosphoribosyl)anthranilate isomerase (217 aa).

Belongs to the TrpF family.

The catalysed reaction is N-(5-phospho-beta-D-ribosyl)anthranilate = 1-(2-carboxyphenylamino)-1-deoxy-D-ribulose 5-phosphate. Its pathway is amino-acid biosynthesis; L-tryptophan biosynthesis; L-tryptophan from chorismate: step 3/5. This Synechococcus sp. (strain ATCC 27144 / PCC 6301 / SAUG 1402/1) (Anacystis nidulans) protein is N-(5'-phosphoribosyl)anthranilate isomerase.